We begin with the raw amino-acid sequence, 459 residues long: Chromosomal replication initiator protein DnaA (459 aa).

The segment at 1-83 (MKNAREIWRN…NKLEIHFIEE (83 aa)) is domain I, interacts with DnaA modulators. Positions 83 to 121 (ESQAHKYAPADGSSNESIAVTETKEQPVLLPSKEEGDLG) are domain II. A domain III, AAA+ region region spans residues 122–338 (QLNDKYIFET…GALTRVVAYA (217 aa)). 4 residues coordinate ATP: Gly166, Gly168, Lys169, and Thr170. Residues 339-459 (KLVGRPIDPD…IQTLKKALSN (121 aa)) form a domain IV, binds dsDNA region.

It belongs to the DnaA family. In terms of assembly, oligomerizes as a right-handed, spiral filament on DNA at oriC.

It localises to the cytoplasm. Functionally, plays an essential role in the initiation and regulation of chromosomal replication. ATP-DnaA binds to the origin of replication (oriC) to initiate formation of the DNA replication initiation complex once per cell cycle. Binds the DnaA box (a 9 base pair repeat at the origin) and separates the double-stranded (ds)DNA. Forms a right-handed helical filament on oriC DNA; dsDNA binds to the exterior of the filament while single-stranded (ss)DNA is stabiized in the filament's interior. The ATP-DnaA-oriC complex binds and stabilizes one strand of the AT-rich DNA unwinding element (DUE), permitting loading of DNA polymerase. After initiation quickly degrades to an ADP-DnaA complex that is not apt for DNA replication. Binds acidic phospholipids. The polypeptide is Chromosomal replication initiator protein DnaA (Exiguobacterium sp. (strain ATCC BAA-1283 / AT1b)).